Reading from the N-terminus, the 257-residue chain is Major prion protein (257 aa).

An N-terminal signal peptide occupies residues 1-24 (MVKSHIGGWILVLFVAAWSDIGLC). The interval 25-234 (KKRPKPGGGW…EYEAYAQRGA (210 aa)) is interaction with GRB2, ERI3 and SYN1. Residues 28-113 (PKPGGGWNTG…NKPSKPKTNM (86 aa)) are disordered. 5 repeat units span residues 54–62 (PQGGGGWGQ), 63–70 (PHGGGWGQ), 71–78 (PHGGGWGQ), 79–86 (PHGGGWGQ), and 87–95 (PHGGGGWGQ). The tract at residues 54–95 (PQGGGGWGQPHGGGWGQPHGGGWGQPHGGGWGQPHGGGGWGQ) is 5 X 8 AA tandem repeats of P-H-G-G-G-W-G-Q. Over residues 55–100 (QGGGGWGQPHGGGWGQPHGGGWGQPHGGGWGQPHGGGGWGQGGGSH) the composition is skewed to gly residues. Cu(2+) is bound by residues His-64, Gly-65, Gly-66, His-72, Gly-73, Gly-74, His-80, Gly-81, Gly-82, His-88, Gly-90, and Gly-91. The cysteines at positions 183 and 218 are disulfide-linked. Residues Asn-185 and Asn-201 are each glycosylated (N-linked (GlcNAc...) asparagine). Ala-234 is lipidated: GPI-anchor amidated alanine. A propeptide spans 235–257 (SVILFSSPPVILLISFLLFLIVG) (removed in mature form).

This sequence belongs to the prion family. In terms of assembly, monomer and homodimer. Has a tendency to aggregate into amyloid fibrils containing a cross-beta spine, formed by a steric zipper of superposed beta-strands. Soluble oligomers may represent an intermediate stage on the path to fibril formation. Copper binding may promote oligomerization. Interacts with GRB2, APP, ERI3/PRNPIP and SYN1. Mislocalized cytosolically exposed PrP interacts with MGRN1; this interaction alters MGRN1 subcellular location and causes lysosomal enlargement. Interacts with KIAA1191.

The protein resides in the cell membrane. Its subcellular location is the golgi apparatus. In terms of biological role, its primary physiological function is unclear. Has cytoprotective activity against internal or environmental stresses. May play a role in neuronal development and synaptic plasticity. May be required for neuronal myelin sheath maintenance. May play a role in iron uptake and iron homeostasis. Soluble oligomers are toxic to cultured neuroblastoma cells and induce apoptosis (in vitro). Association with GPC1 (via its heparan sulfate chains) targets PRNP to lipid rafts. Also provides Cu(2+) or Zn(2+) for the ascorbate-mediated GPC1 deaminase degradation of its heparan sulfate side chains. The sequence is that of Major prion protein (PRNP) from Sus scrofa (Pig).